Here is a 245-residue protein sequence, read N- to C-terminus: Small ribosomal subunit protein uS2 (245 aa).

Belongs to the universal ribosomal protein uS2 family.

This is Small ribosomal subunit protein uS2 from Pseudomonas putida (strain GB-1).